The following is a 310-amino-acid chain: UPF0324 membrane protein GSU2818 (310 aa).

The next 9 helical transmembrane spans lie at Phe-11–Ile-33, Met-53–Ile-72, Ile-79–Gly-97, Ser-107–Leu-129, Thr-136–Gly-158, Ala-193–Ala-215, Ile-227–Leu-244, Leu-254–Leu-273, and Leu-286–Trp-308.

Belongs to the UPF0324 family.

Its subcellular location is the cell membrane. The chain is UPF0324 membrane protein GSU2818 from Geobacter sulfurreducens (strain ATCC 51573 / DSM 12127 / PCA).